Here is a 154-residue protein sequence, read N- to C-terminus: Aspartate carbamoyltransferase regulatory chain (154 aa).

Zn(2+)-binding residues include Cys109, Cys114, Cys138, and Cys141.

This sequence belongs to the PyrI family. As to quaternary structure, contains catalytic and regulatory chains. Zn(2+) serves as cofactor.

In terms of biological role, involved in allosteric regulation of aspartate carbamoyltransferase. The protein is Aspartate carbamoyltransferase regulatory chain of Methanothrix thermoacetophila (strain DSM 6194 / JCM 14653 / NBRC 101360 / PT) (Methanosaeta thermophila).